Here is a 755-residue protein sequence, read N- to C-terminus: Elongation factor G, mitochondrial (755 aa).

A mitochondrion-targeting transit peptide spans 1 to 38 (MFKRVGLIAGIAGPVAGSSRFSAVSFSKRAFSASSKRC). Residues 63 to 344 (KKLRNIGISA…AIVEYLPNPS (282 aa)) enclose the tr-type G domain. Residues 72 to 79 (AHIDSGKT), 143 to 147 (DTPGH), and 197 to 200 (NKMD) contribute to the GTP site.

This sequence belongs to the TRAFAC class translation factor GTPase superfamily. Classic translation factor GTPase family. EF-G/EF-2 subfamily.

It localises to the mitochondrion. It participates in protein biosynthesis; polypeptide chain elongation. In terms of biological role, mitochondrial GTPase that catalyzes the GTP-dependent ribosomal translocation step during translation elongation. During this step, the ribosome changes from the pre-translocational (PRE) to the post-translocational (POST) state as the newly formed A-site-bound peptidyl-tRNA and P-site-bound deacylated tRNA move to the P and E sites, respectively. Catalyzes the coordinated movement of the two tRNA molecules, the mRNA and conformational changes in the ribosome. This is Elongation factor G, mitochondrial from Kluyveromyces lactis (strain ATCC 8585 / CBS 2359 / DSM 70799 / NBRC 1267 / NRRL Y-1140 / WM37) (Yeast).